Consider the following 1138-residue polypeptide: BMP-2-inducible protein kinase (1138 aa).

Ser-13 bears the Phosphoserine mark. The 266-residue stretch at 48 to 313 (VTLEESLAEG…DIFQVSYFAF (266 aa)) folds into the Protein kinase domain. ATP contacts are provided by residues 54–62 (LAEGGFSTV) and Lys-76. The active-site Proton acceptor is the Asp-177. Disordered regions lie at residues 355–435 (TDTI…RVLQ), 638–831 (NRLG…PADA), and 906–1018 (PRSV…EFLT). Positions 358 to 390 (IGPTETSIAPRQRPKANSTAATSSVLTIQSSAT) are enriched in polar residues. The segment covering 417 to 435 (VLMVQGPPQQPPQQHRVLQ) has biased composition (low complexity). Position 676 is a phosphoserine (Ser-676). The span at 684-701 (HSPNQKSITANLTKNGGS) shows a compositional bias: polar residues. Residues 706–715 (KDQRAGKKTS) show a composition bias toward basic and acidic residues. Phosphoserine is present on residues Ser-733, Ser-806, and Ser-807. Residues 787 to 813 (DKHSSDSECEQAKTKRGDTSSLRRDKP) show a composition bias toward basic and acidic residues. Residue Thr-819 is modified to Phosphothreonine. Ser-908 bears the Phosphoserine mark. Over residues 915-926 (TPFQPFSVSASK) the composition is skewed to polar residues. Positions 951–965 (VKQRSLQKLSSRQRR) are enriched in basic residues. Phosphoserine occurs at positions 1010, 1012, 1013, 1020, 1022, 1087, and 1091. A disordered region spans residues 1117 to 1138 (TPQQSQPVELDPFGAAPFPSKQ).

Belongs to the protein kinase superfamily. Ser/Thr protein kinase family. Post-translationally, autophosphorylated. Expressed in osteocytes and osteoblasts.

The protein localises to the nucleus. It catalyses the reaction L-seryl-[protein] + ATP = O-phospho-L-seryl-[protein] + ADP + H(+). The catalysed reaction is L-threonyl-[protein] + ATP = O-phospho-L-threonyl-[protein] + ADP + H(+). May be involved in osteoblast differentiation. The chain is BMP-2-inducible protein kinase (Bmp2k) from Mus musculus (Mouse).